The following is a 119-amino-acid chain: Large ribosomal subunit protein uL22 (119 aa).

Belongs to the universal ribosomal protein uL22 family. Part of the 50S ribosomal subunit.

Functionally, this protein binds specifically to 23S rRNA; its binding is stimulated by other ribosomal proteins, e.g. L4, L17, and L20. It is important during the early stages of 50S assembly. It makes multiple contacts with different domains of the 23S rRNA in the assembled 50S subunit and ribosome. The globular domain of the protein is located near the polypeptide exit tunnel on the outside of the subunit, while an extended beta-hairpin is found that lines the wall of the exit tunnel in the center of the 70S ribosome. This Rhodopirellula baltica (strain DSM 10527 / NCIMB 13988 / SH1) protein is Large ribosomal subunit protein uL22.